Reading from the N-terminus, the 2030-residue chain is Dedicator of cytokinesis protein 3 (2030 aa).

Residues 6-67 form the SH3 domain; the sequence is EEEKYGVVIC…PANYIHLKKA (62 aa). Residues 421-599 enclose the C2 DOCK-type domain; that stretch reads RNDLYLTLEK…ESFFISTQLS (179 aa). Residues 1228–1635 form the DOCKER domain; it reads KSEINKEEMY…LYHEFPGLDK (408 aa). 4 disordered regions span residues 1641–1662, 1734–1771, 1849–1927, and 1951–2030; these read SGTS…PESI, SSSQ…SLPD, DTPP…ADED, and QPCR…RGEQ. Position 1658 is a phosphoserine (Ser-1658). The span at 1734–1754 shows a compositional bias: low complexity; that stretch reads SSSQASPSSSSLSSTHSAPSQ. Polar residues predominate over residues 1755 to 1765; it reads MITSAPSSARG. Positions 1880–1902 are enriched in low complexity; that stretch reads GSNSTLSGSASSGVSSLSESNFG. A compositionally biased stretch (pro residues) spans 1967-1977; the sequence is PMDPPALPPKP. Positions 1970 to 1976 match the SH3-binding motif; the sequence is PPALPPK. Composition is skewed to basic and acidic residues over residues 1984 to 2001 and 2014 to 2030; these read ALEH…ERPR and AKEE…RGEQ.

The protein belongs to the DOCK family. Interacts with presenilin proteins PSEN1 and PSEN2. Interacts with CRK. In terms of tissue distribution, in normal brains, it is localized in the neuropil, and occasionally in the pyramidal cells, while in Alzheimer disease brains, it is associated with neurofibrillary tangles.

It is found in the cytoplasm. Functionally, potential guanine nucleotide exchange factor (GEF). GEF proteins activate some small GTPases by exchanging bound GDP for free GTP. Its interaction with presenilin proteins as well as its ability to stimulate Tau/MAPT phosphorylation suggest that it may be involved in Alzheimer disease. Ectopic expression in nerve cells decreases the secretion of amyloid-beta APBA1 protein and lowers the rate of cell-substratum adhesion, suggesting that it may affect the function of some small GTPase involved in the regulation of actin cytoskeleton or cell adhesion receptors. The chain is Dedicator of cytokinesis protein 3 (DOCK3) from Homo sapiens (Human).